We begin with the raw amino-acid sequence, 271 residues long: MFRSLAKLRCFASSLGLSSHKNIKSVPLIRNIHYIPDNPSYFTQNARFNEIYLHLENILKFAPKIIAAEEDVPKKWKTLEQYQKEFSDPKTTKVGYRKITRLLNELNEIVPEYRTEAVQKALEKFIRPDIVVKTTLKSQMLDENGMSITKGKRKSSKATVKMLPGTGKFYVNGSPFDVYFQRMVHRKHAVYPLAACNRLTNYNVWATVHGGGPTGQSGAVHAAISKSLILQEPSLKQVIKDTHCVLNDKRKVERKKTGQPKARKKYTWVKR.

The transit peptide at methionine 1–phenylalanine 11 directs the protein to the mitochondrion. Residues lysine 251–arginine 271 are disordered. A compositionally biased stretch (basic residues) spans valine 252–arginine 271.

It belongs to the universal ribosomal protein uS9 family. Component of the mitochondrial small ribosomal subunit (mt-SSU). Mature yeast 74S mitochondrial ribosomes consist of a small (37S) and a large (54S) subunit. The 37S small subunit contains a 15S ribosomal RNA (15S mt-rRNA) and at least 32 different proteins. The 54S large subunit contains a 21S rRNA (21S mt-rRNA) and at least 45 different proteins.

The protein localises to the mitochondrion. Functionally, component of the mitochondrial ribosome (mitoribosome), a dedicated translation machinery responsible for the synthesis of mitochondrial genome-encoded proteins, including at least some of the essential transmembrane subunits of the mitochondrial respiratory chain. The mitoribosomes are attached to the mitochondrial inner membrane and translation products are cotranslationally integrated into the membrane. The polypeptide is Small ribosomal subunit protein uS9m (mrps9) (Schizosaccharomyces pombe (strain 972 / ATCC 24843) (Fission yeast)).